Reading from the N-terminus, the 148-residue chain is Puroindoline-B (148 aa).

An N-terminal signal peptide occupies residues 1–19; sequence MKTLFLLALLALVASTTFA. A propeptide spanning residues 20-29 is cleaved from the precursor; that stretch reads QYSEVGGWYN.

Five disulfide bonds are present. In terms of tissue distribution, endosperm and aleurone layer of developing kernels. In the aleurone layer, mainly localized to starch granules and the surface of the plasma membrane, forming a uniform layer, also abundant in the intercellular space. In the endosperm, mainly localized to starch granules and the plasma membrane, but less abundant in the intercellular space. Not found in roots or coleoptiles.

The protein resides in the membrane. It is found in the secreted. Its subcellular location is the extracellular space. In terms of biological role, acts as a membranotoxin, probably through its antibacterial and antifungal activities, contributing to the defense mechanism of the plant against predators. Forms monovalent cation-selective ion channels in membranes. Has antibacterial activity against the Gram-positive bacteria S.aureus and C.michiganensis, and the Gram-negative bacteria E.coli, P.syringae pv phaseoli, A.tumefaciens and E.carotovora subsp carotovora. Acts synergistically with PINA against bacteria. Contributes to grain texture and hardness. This is Puroindoline-B (PINB) from Triticum aestivum (Wheat).